The chain runs to 132 residues: L-ectoine synthase (132 aa).

Belongs to the ectoine synthase family.

The catalysed reaction is (2S)-4-acetamido-2-aminobutanoate = L-ectoine + H2O. The protein operates within amine and polyamine biosynthesis; ectoine biosynthesis; L-ectoine from L-aspartate 4-semialdehyde: step 3/3. Its function is as follows. Catalyzes the circularization of gamma-N-acetyl-alpha,gamma-diaminobutyric acid (ADABA) to ectoine (1,4,5,6-tetrahydro-2-methyl-4-pyrimidine carboxylic acid), which is an excellent osmoprotectant. In Alkalilimnicola ehrlichii (strain ATCC BAA-1101 / DSM 17681 / MLHE-1), this protein is L-ectoine synthase.